The primary structure comprises 384 residues: uncharacterized protein (384 aa).

The disordered stretch occupies residues 1–116 (MTEMPKKKFS…FPAAPPPMDS (116 aa)). Basic and acidic residues-rich tracts occupy residues 14–70 (ARGD…RAGD) and 78–95 (RFKDKDRDKPRYGDDRPR). S-adenosyl-L-methionine-binding residues include glycine 318, isoleucine 338, and leucine 347.

This sequence belongs to the class IV-like SAM-binding methyltransferase superfamily. RNA methyltransferase TrmH family.

This is an uncharacterized protein from Synechocystis sp. (strain ATCC 27184 / PCC 6803 / Kazusa).